A 505-amino-acid polypeptide reads, in one-letter code: L-carnitine/gamma-butyrobetaine antiporter (505 aa).

The next 12 helical transmembrane spans lie at 10-30 (IEPK…WLTV), 51-71 (WGWA…WLVF), 92-112 (IFMM…SIEI), 143-163 (GPLP…FFFV), 195-215 (FYLV…TPLV), 231-251 (LDAI…ACGL), 263-283 (SYLS…SFIM), 316-336 (WTVF…IFLA), 347-367 (LCFG…TVLG), 403-423 (LSTA…VTLI), 446-466 (LLVR…LLAL), and 475-495 (AIIA…LSFI).

Belongs to the BCCT transporter (TC 2.A.15) family. CaiT subfamily. As to quaternary structure, homotrimer.

Its subcellular location is the cell inner membrane. It carries out the reaction 4-(trimethylamino)butanoate(in) + (R)-carnitine(out) = 4-(trimethylamino)butanoate(out) + (R)-carnitine(in). It participates in amine and polyamine metabolism; carnitine metabolism. Its function is as follows. Catalyzes the exchange of L-carnitine for gamma-butyrobetaine. The sequence is that of L-carnitine/gamma-butyrobetaine antiporter from Salmonella agona (strain SL483).